A 379-amino-acid polypeptide reads, in one-letter code: Botryococcene C-methyltransferase (379 aa).

The chain crosses the membrane as a helical span at residues 17–37; sequence LLTWKGAAGLAAAVALGYIII.

The protein belongs to the class I-like SAM-binding methyltransferase superfamily. Erg6/SMT family.

It is found in the microsome membrane. The catalysed reaction is C30 botryococcene + 2 S-adenosyl-L-methionine = 3,20-dimethyl-1,2,21,22-tetradehydro-2,3,20,21-tetrahydrobotryococcene + 2 S-adenosyl-L-homocysteine + 2 H(+). Its function is as follows. Converts botryococcene to mono- and dimethyl derivatives, but not to tri- and tetramethylated products. Unable to methylate cycloartenol, zymosterol or lanosterol, but can also use squalene as substrate. Methylates both C-3 and C22 positions, but only C-3 position in monomethylated squalenes. In contrast, monomethylated botryococcene occured mainly at the C-20 position yielding showacene, but also at the C-3 position yielding isoshowacene. The polypeptide is Botryococcene C-methyltransferase (TMT-3) (Botryococcus braunii (Green alga)).